The chain runs to 346 residues: fMet-Leu-Phe receptor (346 aa).

Residues asparagine 1 and asparagine 7 are each glycosylated (N-linked (GlcNAc...) asparagine). The Extracellular segment spans residues 1-24 (NSSLPTNISGGTPAVSAGYLFLDI). A helical membrane pass occupies residues 25–47 (ITYLVFAVTFVLGVLGNGLVIWV). Topologically, residues 48-58 (AGFRMTHTVTT) are cytoplasmic. A helical transmembrane segment spans residues 59 to 80 (ISYLNLAVADFCFTSTLPFFMV). Over 81-97 (RKAMGGHWPFGWFLCKF) the chain is Extracellular. The cysteines at positions 95 and 173 are disulfide-linked. The chain crosses the membrane as a helical span at residues 98–118 (IFTIVDINLFGSVFLIALIAL). The Cytoplasmic segment spans residues 119–137 (DRCVCVLHPVWTQNHRTVS). A helical membrane pass occupies residues 138–159 (LAKKVIIGPWVMALLLTLPVII). Residues 160–202 (RVTTVPGKTGTVACTFNFSPWTNDPKERINVAIAMLTVRGIIR) lie on the Extracellular side of the membrane. Residues 203–223 (FIIGFSAPMSIVAVSYGLIAT) form a helical membrane-spanning segment. Topologically, residues 224-239 (KIHKQGLIKFSRPLRV) are cytoplasmic. A helical membrane pass occupies residues 240–263 (LSFVAAAFFLCWSPYQVVALIATV). The Extracellular segment spans residues 264–282 (RIRELLQGMYKEIGIAVDV). A helical transmembrane segment spans residues 283–302 (TSALAFFNSCLNPMLYVFMG). Topologically, residues 303–346 (QDFRERLIHALPASLERALTEDSTQTSDTATNSTLPSAEVALQA) are cytoplasmic. Residues 322–346 (TEDSTQTSDTATNSTLPSAEVALQA) are disordered. A compositionally biased stretch (polar residues) spans 323 to 338 (EDSTQTSDTATNSTLP).

This sequence belongs to the G-protein coupled receptor 1 family. In terms of processing, phosphorylated; which is necessary for desensitization.

It localises to the cell membrane. High affinity receptor for N-formyl-methionyl peptides (fMLP), which are powerful neutrophil chemotactic factors. Binding of fMLP to the receptor stimulates intracellular calcium mobilization and superoxide anion release. This response is mediated via a G-protein that activates a phosphatidylinositol-calcium second messenger system. Receptor for TAFA4, mediates its effects on chemoattracting macrophages, promoting phagocytosis and increasing ROS release. Receptor for cathepsin CTSG, leading to increased phagocyte chemotaxis. The polypeptide is fMet-Leu-Phe receptor (FPR1) (Pan troglodytes (Chimpanzee)).